We begin with the raw amino-acid sequence, 329 residues long: Beta-ketoacyl-[acyl-carrier-protein] synthase III (329 aa).

Residues cysteine 114 and histidine 254 contribute to the active site. An ACP-binding region spans residues glutamine 255 to arginine 259. Asparagine 284 is a catalytic residue.

Belongs to the thiolase-like superfamily. FabH family. In terms of assembly, homodimer.

The protein resides in the cytoplasm. It catalyses the reaction malonyl-[ACP] + acetyl-CoA + H(+) = 3-oxobutanoyl-[ACP] + CO2 + CoA. The protein operates within lipid metabolism; fatty acid biosynthesis. Its function is as follows. Catalyzes the condensation reaction of fatty acid synthesis by the addition to an acyl acceptor of two carbons from malonyl-ACP. Catalyzes the first condensation reaction which initiates fatty acid synthesis and may therefore play a role in governing the total rate of fatty acid production. Possesses both acetoacetyl-ACP synthase and acetyl transacylase activities. Its substrate specificity determines the biosynthesis of branched-chain and/or straight-chain of fatty acids. The polypeptide is Beta-ketoacyl-[acyl-carrier-protein] synthase III (Roseiflexus sp. (strain RS-1)).